An 89-amino-acid polypeptide reads, in one-letter code: Small ribosomal subunit protein uS15 (89 aa).

It belongs to the universal ribosomal protein uS15 family. Part of the 30S ribosomal subunit. Forms a bridge to the 50S subunit in the 70S ribosome, contacting the 23S rRNA.

In terms of biological role, one of the primary rRNA binding proteins, it binds directly to 16S rRNA where it helps nucleate assembly of the platform of the 30S subunit by binding and bridging several RNA helices of the 16S rRNA. Functionally, forms an intersubunit bridge (bridge B4) with the 23S rRNA of the 50S subunit in the ribosome. The sequence is that of Small ribosomal subunit protein uS15 from Streptococcus pyogenes serotype M1.